The sequence spans 420 residues: Tyrosine--tRNA ligase (420 aa).

Y36 contributes to the L-tyrosine binding site. Residues 41–50 (PTADSMHIGH) carry the 'HIGH' region motif. Residues Y170 and Q174 each contribute to the L-tyrosine site. A 'KMSKS' region motif is present at residues 231–235 (KFGKS). An ATP-binding site is contributed by K234. The region spanning 353 to 420 (TNIVDFIVEA…KKKYFMVKYK (68 aa)) is the S4 RNA-binding domain.

This sequence belongs to the class-I aminoacyl-tRNA synthetase family. TyrS type 1 subfamily. In terms of assembly, homodimer.

The protein resides in the cytoplasm. The catalysed reaction is tRNA(Tyr) + L-tyrosine + ATP = L-tyrosyl-tRNA(Tyr) + AMP + diphosphate + H(+). Catalyzes the attachment of tyrosine to tRNA(Tyr) in a two-step reaction: tyrosine is first activated by ATP to form Tyr-AMP and then transferred to the acceptor end of tRNA(Tyr). This Staphylococcus carnosus (strain TM300) protein is Tyrosine--tRNA ligase.